Reading from the N-terminus, the 318-residue chain is MKQRNVNRVALIGAGSVGSSYAFALLNQSITEELVIIDLNENKAMGDAMDLNHGKVFAPNPTKTWYGTYSDCKDADIVCICAGANQKPGETRLDLVEKNLRIFKGIVEEIMASGFDGIFLIATNPVDILTYATWKFSGLPKERIIGSGTILDTGRFRFLLGEYFDIAPANVHAYIIGEHGDTELPVWSHADIGGISITELIKRNPEYTMKDLDELFINVRDAAYQIIEKKGATFYGIAMGLARITKAILNNENSVLTVSTYLDGEYGTEDVYMGVPAVVNRNGIREIVELTLNEQERQQFKHSANVLKEILAPNFKEQ.

Residues Val-17, Asp-38, Lys-43, Tyr-69, and 83 to 84 contribute to the NAD(+) site; that span reads GA. Residues Gln-86, Arg-92, and 124–127 each bind substrate; that span reads NPVD. Residues 122–124 and Ser-147 each bind NAD(+); that span reads ATN. 152-155 contacts substrate; that stretch reads DTGR. Residues Arg-157 and His-172 each contribute to the beta-D-fructose 1,6-bisphosphate site. The active-site Proton acceptor is the His-179. At Tyr-224 the chain carries Phosphotyrosine. Thr-233 is a substrate binding site.

Belongs to the LDH/MDH superfamily. LDH family. In terms of assembly, homotetramer.

The protein localises to the cytoplasm. The catalysed reaction is (S)-lactate + NAD(+) = pyruvate + NADH + H(+). Its pathway is fermentation; pyruvate fermentation to lactate; (S)-lactate from pyruvate: step 1/1. Its activity is regulated as follows. Allosterically activated by fructose 1,6-bisphosphate (FBP). In terms of biological role, catalyzes the conversion of lactate to pyruvate. The polypeptide is L-lactate dehydrogenase 1 (Peribacillus psychrosaccharolyticus (Bacillus psychrosaccharolyticus)).